The sequence spans 448 residues: MNINAAPQILGRSSQDITPGYMSGFGNSFETEALPGALPVGRNSPQRCAYGLYAEQLSGSPFTAPRGANERSWLYRIRPSVKHSGRFAKTDMGLWRSAPCFEHDLPIAQLRWDPPPMPQEKLTFLQGVRTMTTAGDVNTQAGMATHLYLITQSMVDQHFYNADGEMMFVPQQGSLRLVTEFGIITIEPAEIAVIPRGIKFRVELVDGPARGYLCENYGGAFTLPERGPIGANCLANSRDFLTPVAAYEDKDTPTELYVKWGGSLYVTKLPHSPIDVVAWHGNYAPYKYDLRTYSPVGAIGFDHPDPSIFTVLTSPSETPGTANIDFVIFPERWMVADNTFRPPWYHMNIMSEFMGLIYGVYDAKPQGFVPGGASLHNMMLPHGPDREAFDHASNGELKPVKLTGTMAFMFETRYPQRVTEYAASSGLLQDDYADCWNGLEKRFDPNRP.

The active-site Proton acceptor is His303. Residues His346 and Glu352 each coordinate Fe cation. Positions 361 and 382 each coordinate homogentisate. His382 contacts Fe cation.

The protein belongs to the homogentisate dioxygenase family. Hexamer; dimer of trimers. It depends on Fe cation as a cofactor.

The catalysed reaction is homogentisate + O2 = 4-maleylacetoacetate + H(+). It participates in amino-acid degradation; L-phenylalanine degradation; acetoacetate and fumarate from L-phenylalanine: step 4/6. Functionally, involved in the catabolism of homogentisate (2,5-dihydroxyphenylacetate or 2,5-OH-PhAc), a central intermediate in the degradation of phenylalanine and tyrosine. Catalyzes the oxidative ring cleavage of the aromatic ring of homogentisate to yield maleylacetoacetate. This Rhodopseudomonas palustris (strain TIE-1) protein is Homogentisate 1,2-dioxygenase.